A 124-amino-acid polypeptide reads, in one-letter code: Chorion class high-cysteine HCA protein 12 (124 aa).

A signal peptide spans M1–G21. The left arm stretch occupies residues Q22–G35. The interval C36–I83 is central domain. The right arm (Gly- and Cys-rich tandem repeats) stretch occupies residues C84–C124.

It belongs to the chorion protein family.

Its function is as follows. This protein is one of many from the eggshell of the silk moth. This Bombyx mori (Silk moth) protein is Chorion class high-cysteine HCA protein 12.